The primary structure comprises 248 residues: MSLVKRSVAEFIGTFWLVLGGCGAAVLAAAFPNLGIGFAGVSLAFGLTLLTMAFAIGHISGCHINPAVSIGLWAAKRFPATELLPYIAAQVLGGIAGAGVLYLIAGGKAGFSLSGGFASNGYGLHSPGGYTLLACLVCEVVMTFMFLMIILGSTDRRAPKGFAPIAIGLSLTLIHLISIPVTNTSVNPARSTGPALFVGDWAIAELWLFWLAPIVGAALAGLFYHAFLDEPGEETEGTPASAQLRTEA.

Transmembrane regions (helical) follow at residues 11–31 (FIGT…AAAF) and 36–56 (IGFA…AFAI). The short motif at 65 to 67 (NPA) is the NPA 1 element. A run of 3 helical transmembrane segments spans residues 87 to 107 (IAAQ…IAGG), 132 to 152 (LLAC…IILG), and 161 to 181 (GFAP…SIPV). An NPA 2 motif is present at residues 187–189 (NPA). A helical membrane pass occupies residues 203-223 (IAELWLFWLAPIVGAALAGLF).

Belongs to the MIP/aquaporin (TC 1.A.8) family. As to quaternary structure, homotetramer.

It localises to the cell inner membrane. The enzyme catalyses H2O(in) = H2O(out). In terms of biological role, channel that permits osmotically driven movement of water in both directions. It is involved in the osmoregulation and in the maintenance of cell turgor during volume expansion in rapidly growing cells. It mediates rapid entry or exit of water in response to abrupt changes in osmolarity. The chain is Aquaporin Z from Gloeobacter violaceus (strain ATCC 29082 / PCC 7421).